Reading from the N-terminus, the 250-residue chain is Pyridoxine 5'-phosphate synthase (250 aa).

Residue N11 coordinates 3-amino-2-oxopropyl phosphate. 13-14 (DH) serves as a coordination point for 1-deoxy-D-xylulose 5-phosphate. R22 is a 3-amino-2-oxopropyl phosphate binding site. The active-site Proton acceptor is H47. R49 and H54 together coordinate 1-deoxy-D-xylulose 5-phosphate. The active-site Proton acceptor is E74. T104 provides a ligand contact to 1-deoxy-D-xylulose 5-phosphate. The active-site Proton donor is the H198. Residues G199 and 220 to 221 (GY) contribute to the 3-amino-2-oxopropyl phosphate site.

It belongs to the PNP synthase family. Homooctamer; tetramer of dimers.

The protein resides in the cytoplasm. It catalyses the reaction 3-amino-2-oxopropyl phosphate + 1-deoxy-D-xylulose 5-phosphate = pyridoxine 5'-phosphate + phosphate + 2 H2O + H(+). Its pathway is cofactor biosynthesis; pyridoxine 5'-phosphate biosynthesis; pyridoxine 5'-phosphate from D-erythrose 4-phosphate: step 5/5. Its function is as follows. Catalyzes the complicated ring closure reaction between the two acyclic compounds 1-deoxy-D-xylulose-5-phosphate (DXP) and 3-amino-2-oxopropyl phosphate (1-amino-acetone-3-phosphate or AAP) to form pyridoxine 5'-phosphate (PNP) and inorganic phosphate. This Bradyrhizobium diazoefficiens (strain JCM 10833 / BCRC 13528 / IAM 13628 / NBRC 14792 / USDA 110) protein is Pyridoxine 5'-phosphate synthase.